A 411-amino-acid chain; its full sequence is Transforming growth factor beta regulator 1 (411 aa).

2 disordered regions span residues methionine 1–serine 29 and glycine 119–glutamate 146. Residue serine 2 is modified to N-acetylserine. The residue at position 10 (serine 10) is a Phosphoserine. One can recognise an FYR N-terminal domain in the interval valine 182–glycine 241. The FYR C-terminal domain maps to glycine 242–lysine 321.

This sequence belongs to the TBRG1 family. Interacts with CDKN2A and MDM2. Ubiquitinated; mediated by MDM2 and leading to its subsequent proteasomal degradation. In terms of tissue distribution, widely expressed at low levels in most tissues, with highest levels in pancreas, lung and liver. Expression is decreased in primary tumors including lung, liver, breast, pancreas and kidney carcinomas, chronic lymphocytic leukemia and diffuse large B-cell lymphoma.

It localises to the nucleus. In terms of biological role, acts as a growth inhibitor. Can activate p53/TP53, causes G1 arrest and collaborates with CDKN2A to restrict proliferation, but does not require either protein to inhibit DNA synthesis. Redistributes CDKN2A into the nucleoplasm. Involved in maintaining chromosomal stability. This Homo sapiens (Human) protein is Transforming growth factor beta regulator 1 (TBRG1).